A 130-amino-acid polypeptide reads, in one-letter code: Large ribosomal subunit protein bL12c (130 aa).

This sequence belongs to the bacterial ribosomal protein bL12 family. In terms of assembly, homodimer. Part of the ribosomal stalk of the 50S ribosomal subunit. Forms a multimeric L10(L12)X complex, where L10 forms an elongated spine to which 2 to 4 L12 dimers bind in a sequential fashion. Binds GTP-bound translation factors.

It is found in the plastid. Its subcellular location is the chloroplast. In terms of biological role, forms part of the ribosomal stalk which helps the ribosome interact with GTP-bound translation factors. Is thus essential for accurate translation. The sequence is that of Large ribosomal subunit protein bL12c from Cyanidium caldarium (Red alga).